The following is a 296-amino-acid chain: Diaminopimelate epimerase (296 aa).

Substrate is bound by residues N17, Q49, and N69. The active-site Proton donor is C78. Substrate is bound by residues 79–80 (GN), N171, N205, and 223–224 (ER). C232 acts as the Proton acceptor in catalysis. 233-234 (GT) is a binding site for substrate.

The protein belongs to the diaminopimelate epimerase family. Homodimer.

The protein resides in the cytoplasm. It carries out the reaction (2S,6S)-2,6-diaminopimelate = meso-2,6-diaminopimelate. It participates in amino-acid biosynthesis; L-lysine biosynthesis via DAP pathway; DL-2,6-diaminopimelate from LL-2,6-diaminopimelate: step 1/1. Catalyzes the stereoinversion of LL-2,6-diaminopimelate (L,L-DAP) to meso-diaminopimelate (meso-DAP), a precursor of L-lysine and an essential component of the bacterial peptidoglycan. In Methylorubrum extorquens (strain PA1) (Methylobacterium extorquens), this protein is Diaminopimelate epimerase.